A 257-amino-acid polypeptide reads, in one-letter code: Type III pantothenate kinase (257 aa).

An ATP-binding site is contributed by 6-13 (DCGNTNTV). 107 to 110 (GPDR) is a binding site for substrate. Asp-109 functions as the Proton acceptor in the catalytic mechanism. Residue Asp-129 participates in K(+) binding. Thr-132 contacts ATP. Position 184 (Thr-184) interacts with substrate.

The protein belongs to the type III pantothenate kinase family. As to quaternary structure, homodimer. Requires NH4(+) as cofactor. K(+) serves as cofactor.

It is found in the cytoplasm. It carries out the reaction (R)-pantothenate + ATP = (R)-4'-phosphopantothenate + ADP + H(+). It functions in the pathway cofactor biosynthesis; coenzyme A biosynthesis; CoA from (R)-pantothenate: step 1/5. In terms of biological role, catalyzes the phosphorylation of pantothenate (Pan), the first step in CoA biosynthesis. In Cereibacter sphaeroides (strain ATCC 17029 / ATH 2.4.9) (Rhodobacter sphaeroides), this protein is Type III pantothenate kinase.